The following is a 193-amino-acid chain: Signal peptidase complex catalytic subunit SEC11 (193 aa).

At 1–16 (MFSEELKAFRRLGIRH) the chain is on the cytoplasmic side. A helical; Signal-anchor for type II membrane protein membrane pass occupies residues 17–41 (LLLQALNFASVIASGLMMWKGLGVI). Residues 42-193 (TNTESPIVVV…LGLMALIQRE (152 aa)) lie on the Lumenal side of the membrane. Catalysis depends on charge relay system residues Ser-55 and His-95. Asn-106 is a glycosylation site (N-linked (GlcNAc...) asparagine). Asp-136 (charge relay system) is an active-site residue. The interval 179–190 (GLLGILGLMALI) is C-terminal short (CTS) helix.

Belongs to the peptidase S26B family. As to quaternary structure, component of the signal peptidase complex (SPC) composed of a catalytic subunit SEC11 and three accessory subunits SPC1, SPC2 and SPC3. The complex induces a local thinning of the ER membrane which is used to measure the length of the signal peptide (SP) h-region of protein substrates. This ensures the selectivity of the complex towards h-regions shorter than 18-20 amino acids. SPC associates with the translocon complex.

It localises to the endoplasmic reticulum membrane. It carries out the reaction Cleavage of hydrophobic, N-terminal signal or leader sequences from secreted and periplasmic proteins.. Functionally, catalytic component of the signal peptidase complex (SPC) which catalyzes the cleavage of N-terminal signal sequences from nascent proteins as they are translocated into the lumen of the endoplasmic reticulum. Specifically cleaves N-terminal signal peptides that contain a hydrophobic alpha-helix (h-region) shorter than 18-20 amino acids. The polypeptide is Signal peptidase complex catalytic subunit SEC11 (SEC11) (Schizophyllum commune (strain H4-8 / FGSC 9210) (Split gill fungus)).